Reading from the N-terminus, the 93-residue chain is Large ribosomal subunit protein bL31B (93 aa).

Belongs to the bacterial ribosomal protein bL31 family. Type B subfamily. As to quaternary structure, part of the 50S ribosomal subunit.

The chain is Large ribosomal subunit protein bL31B from Psychrobacter cryohalolentis (strain ATCC BAA-1226 / DSM 17306 / VKM B-2378 / K5).